The chain runs to 426 residues: Probable auxin efflux carrier component 9 (426 aa).

Over Met-1 to Glu-6 the chain is Extracellular. A helical transmembrane segment spans residues Val-7–Ser-27. Topologically, residues Val-28–Gln-38 are cytoplasmic. A helical membrane pass occupies residues Cys-39–Val-59. Residue Val-51 coordinates (indol-3-yl)acetate. The Extracellular segment spans residues Ser-60 to Arg-70. A helical membrane pass occupies residues Leu-71 to Leu-91. Topologically, residues Trp-92–Trp-114 are cytoplasmic. The helical transmembrane segment at Val-115–Leu-135 threads the bilayer. (indol-3-yl)acetate is bound by residues Asn-126 and Ile-128. Topologically, residues Asn-136 to Asp-145 are extracellular. A helical transmembrane segment spans residues Leu-146–Tyr-166. (indol-3-yl)acetate is bound at residue Tyr-159. At Glu-167 to Ser-286 the chain is on the cytoplasmic side. The tract at residues Arg-232–Glu-258 is disordered. The chain crosses the membrane as a helical span at residues Phe-287–Val-307. Residues Glu-308–Ser-310 lie on the Extracellular side of the membrane. A helical membrane pass occupies residues Leu-311 to Ala-331. The Cytoplasmic segment spans residues Arg-332–Ser-347. Residues Met-348 to Met-368 form a helical membrane-spanning segment. The Extracellular segment spans residues His-369–Thr-371. A helical transmembrane segment spans residues Leu-372–Ala-392. Val-386 contacts (indol-3-yl)acetate. Over Glu-393 to Gly-405 the chain is Cytoplasmic. Residues Val-406–Leu-426 traverse the membrane as a helical segment.

The protein belongs to the auxin efflux carrier (TC 2.A.69.1) family. In terms of assembly, homodimer. As to expression, expressed in roots, leaves and shoot apex. Expressed in roots, stem bases, stems, leaves and young panicles.

Its subcellular location is the membrane. May act as a component of the auxin efflux carrier. This Oryza sativa subsp. japonica (Rice) protein is Probable auxin efflux carrier component 9.